A 161-amino-acid polypeptide reads, in one-letter code: Regulator of ribonuclease activity A (161 aa).

This sequence belongs to the RraA family. Homotrimer. Binds to both RNA-binding sites in the C-terminal region of Rne and to RhlB.

Its subcellular location is the cytoplasm. Functionally, globally modulates RNA abundance by binding to RNase E (Rne) and regulating its endonucleolytic activity. Can modulate Rne action in a substrate-dependent manner by altering the composition of the degradosome. Modulates RNA-binding and helicase activities of the degradosome. This is Regulator of ribonuclease activity A from Salmonella choleraesuis (strain SC-B67).